Here is a 72-residue protein sequence, read N- to C-terminus: Large ribosomal subunit protein uL29 (72 aa).

Belongs to the universal ribosomal protein uL29 family.

The protein is Large ribosomal subunit protein uL29 of Chlamydia trachomatis serovar L2 (strain ATCC VR-902B / DSM 19102 / 434/Bu).